The following is a 258-amino-acid chain: Ribosomal RNA small subunit methyltransferase J (258 aa).

Residues 107–108 (RD), 123–124 (ER), and aspartate 177 contribute to the S-adenosyl-L-methionine site.

This sequence belongs to the methyltransferase superfamily. RsmJ family.

The protein localises to the cytoplasm. The enzyme catalyses guanosine(1516) in 16S rRNA + S-adenosyl-L-methionine = N(2)-methylguanosine(1516) in 16S rRNA + S-adenosyl-L-homocysteine + H(+). Functionally, specifically methylates the guanosine in position 1516 of 16S rRNA. This chain is Ribosomal RNA small subunit methyltransferase J, found in Stutzerimonas stutzeri (strain A1501) (Pseudomonas stutzeri).